The following is a 478-amino-acid chain: Antiviral innate immune response effector IFIT1 (478 aa).

TPR repeat units lie at residues 52–85 (VGIH…MQKE), 95–128 (LVTW…CKKP), 139–174 (PEID…DHEN), 183–216 (ISAY…NPDN), 218–249 (YLKV…NMSS), and 251–284 (TYVF…TPTS). Residue tryptophan 147 coordinates mRNA. Glycine 190 provides a ligand contact to RNA. RNA is bound by residues lysine 259, histidine 289, glutamine 290, and lysine 336. TPR repeat units follow at residues 305–339 (ATKG…KPTF), 340–373 (EVAH…KPVV), 378–412 (QDIH…EQTS), and 437–470 (LESL…AADF).

It belongs to the IFIT family. As to quaternary structure, component of an interferon-dependent multiprotein complex, at least composed of IFIT1, IFIT2 and IFIT3. Interacts (via TPR repeats 1-4) with RPL15. Interacts with STING1/MITA; could disrupt STING1 interaction with MAVS or TBK1, acting as a negative-feedback regulator of virus-triggered signaling. Interacts with EIF3E; this could be an alternative way to inhibit translation. In terms of processing, phosphorylated. Post-translationally, ISGylated.

The protein resides in the cytoplasm. In terms of biological role, plays a key role in the innate immune response as part of an interferon-dependent multiprotein complex, recognizing and sequestering viral RNAs that lack host-specific 2'-O-methylation at their 5' cap. By distinguishing these RNAs from host mRNAs, inhibits their translation by competing with the translation initiation factor eIF4E. Could also prevent viral replication through its interaction with DNA replication origin-binding protein E1 of several viruses. Causes the translocation of E1 from the nucleus to the cytoplasm and can also inhibit its helicase activity in vitro. The chain is Antiviral innate immune response effector IFIT1 from Macaca fascicularis (Crab-eating macaque).